The primary structure comprises 152 residues: Large ribosomal subunit protein uL15 (152 aa).

The segment at 1–57 (MTSTLNTLKSNSGSRKKKLRKGRGIAAGQGASCGFGMRGQKSRSGRPTRPGFEGGQM) is disordered. Positions 14-23 (SRKKKLRKGR) are enriched in basic residues. The span at 25–37 (IAAGQGASCGFGM) shows a compositional bias: gly residues.

It belongs to the universal ribosomal protein uL15 family. In terms of assembly, part of the 50S ribosomal subunit.

Its function is as follows. Binds to the 23S rRNA. The polypeptide is Large ribosomal subunit protein uL15 (Prochlorococcus marinus (strain MIT 9215)).